The following is a 231-amino-acid chain: Phosphatidylserine decarboxylase proenzyme (231 aa).

The Schiff-base intermediate with substrate; via pyruvic acid role is filled by Ser-188. Residue Ser-188 is modified to Pyruvic acid (Ser); by autocatalysis.

The protein belongs to the phosphatidylserine decarboxylase family. PSD-A subfamily. In terms of assembly, heterodimer of a large membrane-associated beta subunit and a small pyruvoyl-containing alpha subunit. Pyruvate is required as a cofactor. Is synthesized initially as an inactive proenzyme. Formation of the active enzyme involves a self-maturation process in which the active site pyruvoyl group is generated from an internal serine residue via an autocatalytic post-translational modification. Two non-identical subunits are generated from the proenzyme in this reaction, and the pyruvate is formed at the N-terminus of the alpha chain, which is derived from the carboxyl end of the proenzyme. The post-translation cleavage follows an unusual pathway, termed non-hydrolytic serinolysis, in which the side chain hydroxyl group of the serine supplies its oxygen atom to form the C-terminus of the beta chain, while the remainder of the serine residue undergoes an oxidative deamination to produce ammonia and the pyruvoyl prosthetic group on the alpha chain.

Its subcellular location is the cell membrane. It catalyses the reaction a 1,2-diacyl-sn-glycero-3-phospho-L-serine + H(+) = a 1,2-diacyl-sn-glycero-3-phosphoethanolamine + CO2. The protein operates within phospholipid metabolism; phosphatidylethanolamine biosynthesis; phosphatidylethanolamine from CDP-diacylglycerol: step 2/2. Functionally, catalyzes the formation of phosphatidylethanolamine (PtdEtn) from phosphatidylserine (PtdSer). The chain is Phosphatidylserine decarboxylase proenzyme from Rickettsia africae (strain ESF-5).